Consider the following 327-residue polypeptide: GMP reductase (327 aa).

Catalysis depends on cysteine 175, which acts as the Thioimidate intermediate. Isoleucine 204 to valine 227 contacts NADP(+).

This sequence belongs to the IMPDH/GMPR family. GuaC type 2 subfamily.

The catalysed reaction is IMP + NH4(+) + NADP(+) = GMP + NADPH + 2 H(+). Its function is as follows. Catalyzes the irreversible NADPH-dependent deamination of GMP to IMP. It functions in the conversion of nucleobase, nucleoside and nucleotide derivatives of G to A nucleotides, and in maintaining the intracellular balance of A and G nucleotides. The chain is GMP reductase from Exiguobacterium sp. (strain ATCC BAA-1283 / AT1b).